The chain runs to 352 residues: Glucose-6-phosphatase catalytic subunit 1 (352 aa).

Over 1 to 27 (MDLLHSWGVELAVYLQTRYGKYEGLFD) the chain is Lumenal. The helical transmembrane segment at 28 to 48 (LASTVADLHTTFFWLFPIWFH) threads the bilayer. Residues 49–56 (LRRDTALR) are Cytoplasmic-facing. Residues 57–77 (LIWVAVIGDWLNLVLKWVLFG) traverse the membrane as a helical segment. Over 78-113 (ERPYWWVHETKFYGAGPAPSLQQFPITCETGPGSPS) the chain is Lumenal. Substrate is bound at residue Arg79. The helical transmembrane segment at 114–134 (GHAMGAAGVWYVMVTALLSIA) threads the bilayer. The Proton donor role is filled by His115. Residues 135–141 (REKQCPP) lie on the Cytoplasmic side of the membrane. A helical transmembrane segment spans residues 142 to 162 (LLYRFLYIGLWMLMGLVELVV). Residues 163 to 166 (CISR) are Lumenal-facing. Residue Arg166 coordinates substrate. A helical transmembrane segment spans residues 167 to 187 (VYMAAHFPHQVIAGIITGTLV). The active-site Nucleophile is the His172. Over 188-205 (AEVVSKEKWIYSASLKKY) the chain is Cytoplasmic. A helical transmembrane segment spans residues 206–226 (FLITLFLTSFAVGFYVLLKAL). Topologically, residues 227-256 (DVDLLWTMEKAQKWCIRPEWVHLDSAPFAS) are lumenal. A helical transmembrane segment spans residues 257-276 (LLRNMGSLFGLGLGLHSPFY). Residues 277–289 (KTTKMRIMSAPLR) lie on the Cytoplasmic side of the membrane. Residues 290 to 310 (IGCIVISVSLLHLLDGWTFSP) traverse the membrane as a helical segment. The Lumenal segment spans residues 311 to 324 (ENHMTFYALSFGKS). A helical transmembrane segment spans residues 325-345 (AVALLIPTTLVPWALSKIYPV). The Cytoplasmic portion of the chain corresponds to 346 to 352 (KTEGKNL). Residues 349-352 (GKNL) carry the Prevents secretion from ER motif.

Belongs to the glucose-6-phosphatase family.

It is found in the endoplasmic reticulum membrane. The enzyme catalyses D-glucose 6-phosphate + H2O = D-glucose + phosphate. Its pathway is carbohydrate biosynthesis; gluconeogenesis. Its function is as follows. Hydrolyzes glucose-6-phosphate to glucose in the endoplasmic reticulum. Forms with the glucose-6-phosphate transporter (SLC37A4/G6PT) the complex responsible for glucose production in the terminal step of glycogenolysis and gluconeogenesis. Hence, it is the key enzyme in homeostatic regulation of blood glucose levels. In Haplochromis nubilus (Blue Victoria mouthbrooder), this protein is Glucose-6-phosphatase catalytic subunit 1 (g6pc1).